The sequence spans 258 residues: Phosphate import ATP-binding protein PstB (258 aa).

Residues 5–247 enclose the ABC transporter domain; that stretch reads LDLKDVNIYY…EKIFSNPTQK (243 aa). 37 to 44 serves as a coordination point for ATP; the sequence is GPSGCGKS.

The protein belongs to the ABC transporter superfamily. Phosphate importer (TC 3.A.1.7) family. In terms of assembly, the complex is composed of two ATP-binding proteins (PstB), two transmembrane proteins (PstC and PstA) and a solute-binding protein (PstS).

It localises to the cell membrane. The enzyme catalyses phosphate(out) + ATP + H2O = ADP + 2 phosphate(in) + H(+). Its function is as follows. Part of the ABC transporter complex PstSACB involved in phosphate import. Responsible for energy coupling to the transport system. This chain is Phosphate import ATP-binding protein PstB, found in Rhodococcus jostii (strain RHA1).